A 138-amino-acid polypeptide reads, in one-letter code: Acidic phospholipase A2 1 (138 aa).

The first 16 residues, 1–16 (MRTLWIMAVLLVGVEG), serve as a signal peptide directing secretion. Intrachain disulfides connect cysteine 42–cysteine 131, cysteine 44–cysteine 60, cysteine 59–cysteine 111, cysteine 65–cysteine 138, cysteine 66–cysteine 104, cysteine 73–cysteine 97, and cysteine 91–cysteine 102. Residues phenylalanine 43, glycine 45, and glycine 47 each contribute to the Ca(2+) site. Histidine 63 is an active-site residue. Ca(2+) is bound at residue aspartate 64. Residue aspartate 105 is part of the active site.

This sequence belongs to the phospholipase A2 family. Group II subfamily. D49 sub-subfamily. It depends on Ca(2+) as a cofactor. As to expression, expressed by the venom gland.

The protein resides in the secreted. It catalyses the reaction a 1,2-diacyl-sn-glycero-3-phosphocholine + H2O = a 1-acyl-sn-glycero-3-phosphocholine + a fatty acid + H(+). In terms of biological role, snake venom phospholipase A2 (PLA2) that has high lipolytic activity. PLA2 catalyzes the calcium-dependent hydrolysis of the 2-acyl groups in 3-sn-phosphoglycerides. The protein is Acidic phospholipase A2 1 of Craspedocephalus gramineus (Bamboo pit viper).